Reading from the N-terminus, the 205-residue chain is UPF0548 protein At2g17695 (205 aa).

Belongs to the UPF0548 family.

In Arabidopsis thaliana (Mouse-ear cress), this protein is UPF0548 protein At2g17695.